The sequence spans 132 residues: Agouti-signaling protein (132 aa).

Positions 1-22 are cleaved as a signal peptide; sequence MDVTRLLLATLLVFLCFFTADS. Residue N39 is glycosylated (N-linked (GlcNAc...) asparagine). A disordered region spans residues 62 to 85; that stretch reads ISRKEAEKKRSSKKEASMKTVARP. A compositionally biased stretch (basic and acidic residues) spans 63-78; the sequence is SRKEAEKKRSSKKEAS. 5 disulfides stabilise this stretch: C93–C108, C100–C114, C107–C125, C111–C132, and C116–C123. One can recognise an Agouti domain in the interval 93–132; it reads CVATRNSCKPPAPACCDPCASCQCRFFRSACSCRVLSLNC.

The protein resides in the secreted. Involved in the regulation of melanogenesis. The binding of ASP to MC1R precludes alpha-MSH initiated signaling and thus blocks production of cAMP, leading to a down-regulation of eumelanogenesis (brown/black pigment) and thus increasing synthesis of pheomelanin (yellow/red pigment). The sequence is that of Agouti-signaling protein (ASIP) from Pongo pygmaeus (Bornean orangutan).